Here is a 251-residue protein sequence, read N- to C-terminus: Mlc titration factor A (251 aa).

Residues His111, His148, His152, and Glu211 each coordinate Zn(2+).

This sequence belongs to the MtfA family. Interacts with Mlc. It depends on Zn(2+) as a cofactor.

Its subcellular location is the cytoplasm. Functionally, involved in the modulation of the activity of the glucose-phosphotransferase system (glucose-PTS). Interacts with the transcriptional repressor Mlc, preventing its interaction with DNA and leading to the modulation of expression of genes regulated by Mlc, including ptsG, which encodes the PTS system glucose-specific EIICB component. In terms of biological role, shows zinc-dependent metallopeptidase activity. In Salmonella arizonae (strain ATCC BAA-731 / CDC346-86 / RSK2980), this protein is Mlc titration factor A.